Here is a 581-residue protein sequence, read N- to C-terminus: Fibrous sheath-interacting protein 1 (581 aa).

Residues 1 to 77 form a disordered region; it reads MDIIKGNLDG…SNDDKQESCS (77 aa). A compositionally biased stretch (polar residues) spans 14-30; the sequence is PASNSRIRPGSRSSNAS. The segment covering 52–77 has biased composition (basic and acidic residues); that stretch reads GKEDHSESSNTENRRTSNDDKQESCS. Residue S87 is modified to Phosphoserine. Residues 105–153 adopt a coiled-coil conformation; sequence EPKLKELDSQLQDAIQKMKKLDKILAKKQRREKEIKKQGLEMRIKLWEE. Disordered regions lie at residues 338–365 and 555–581; these read SSFS…VTPG and HLKL…CKEP. 2 stretches are compositionally biased toward basic and acidic residues: residues 344-360 and 569-581; these read LENR…ERNM and QETK…CKEP.

It belongs to the FSIP1 family.

The sequence is that of Fibrous sheath-interacting protein 1 (FSIP1) from Homo sapiens (Human).